A 243-amino-acid polypeptide reads, in one-letter code: Sarcospan (243 aa).

The segment at 1-43 is disordered; it reads MGKNKQPRGQQRQGGPPAADAAGPDDMEPKKGTGAPKECGEEE. At 1 to 53 the chain is on the cytoplasmic side; that stretch reads MGKNKQPRGQQRQGGPPAADAAGPDDMEPKKGTGAPKECGEEEPRTCCGCRFP. Residues 7–24 are compositionally biased toward low complexity; it reads PRGQQRQGGPPAADAAGP. The chain crosses the membrane as a helical span at residues 54–74; that stretch reads LLLALLQLALGIAVTVVGFLM. Residues 75–86 are Extracellular-facing; sequence ASISSSLLVRDT. Residues 87-107 traverse the membrane as a helical segment; that stretch reads PFWAGIIVCLVAYLGLFMLCV. Residues 108–122 are Cytoplasmic-facing; it reads SYQVDERTCIQFSMK. Residues 123–143 form a helical membrane-spanning segment; it reads LLYFLLSALGLTVCVLAVAFA. The Extracellular segment spans residues 144–193; sequence AHHYSQLTQFTCETTLDSCQCKLPSSEPLSRTFVYRDVTDCTSVTGTFKL. The helical transmembrane segment at 194 to 214 threads the bilayer; that stretch reads FLLIQMILNLVCGLVCLLACF. The Cytoplasmic portion of the chain corresponds to 215–243; it reads VMWKHRYQVFYVGVRICSLTASEGPQQKI.

Isoform 1 is expressed exclusively in heart and skeletal muscle. Isoform 2 is expressed in heart, skeletal muscle, thymus, prostate, testis, ovary, small intestine, colon and spleen.

Its subcellular location is the cell membrane. The protein resides in the sarcolemma. It is found in the postsynaptic cell membrane. In terms of biological role, component of the dystrophin-glycoprotein complex (DGC), a complex that spans the muscle plasma membrane and forms a link between the F-actin cytoskeleton and the extracellular matrix. Preferentially associates with the sarcoglycan subcomplex of the DGC. This chain is Sarcospan (SSPN), found in Homo sapiens (Human).